The following is a 325-amino-acid chain: Elongation factor P--(R)-beta-lysine ligase (325 aa).

Residue 76–78 (SPE) participates in substrate binding. ATP-binding positions include 100–102 (RNE) and N109. Substrate is bound at residue Y118. 244–245 (EL) is an ATP binding site. Residue E251 participates in substrate binding. Residue G300 participates in ATP binding.

It belongs to the class-II aminoacyl-tRNA synthetase family. EpmA subfamily. As to quaternary structure, homodimer.

The enzyme catalyses D-beta-lysine + L-lysyl-[protein] + ATP = N(6)-((3R)-3,6-diaminohexanoyl)-L-lysyl-[protein] + AMP + diphosphate + H(+). Its function is as follows. With EpmB is involved in the beta-lysylation step of the post-translational modification of translation elongation factor P (EF-P) on 'Lys-34'. Catalyzes the ATP-dependent activation of (R)-beta-lysine produced by EpmB, forming a lysyl-adenylate, from which the beta-lysyl moiety is then transferred to the epsilon-amino group of EF-P 'Lys-34'. The polypeptide is Elongation factor P--(R)-beta-lysine ligase (Escherichia coli O139:H28 (strain E24377A / ETEC)).